A 251-amino-acid polypeptide reads, in one-letter code: Protein crossbronx (251 aa).

One can recognise a UBC core domain in the interval 20-176 (QQEYKILAEY…TRENIRESLA (157 aa)). The disordered stretch occupies residues 211-251 (QSKHLESQSQQSNNGGNGGGGGAATGLSWVKEGEFKPLSVE). Positions 225–234 (GGNGGGGGAA) are enriched in gly residues.

The protein belongs to the ubiquitin-conjugating enzyme family. FTS subfamily.

In Drosophila willistoni (Fruit fly), this protein is Protein crossbronx (cbx).